The sequence spans 612 residues: Kelch repeat and BTB domain-containing protein 3 (612 aa).

Residues 52–119 enclose the BTB domain; sequence YDFKIIMKDE…AYTGKTKITD (68 aa). A BACK domain is found at 154-254; the sequence is CLQLLSISDS…QLSEETLQDC (101 aa). Kelch repeat units lie at residues 295-341, 343-403, 404-454, 456-506, and 552-599; these read KYIF…SSYG, KIFL…MALD, RLFV…TCQN, IYVL…KAVP, and KIYI…VIQF.

This chain is Kelch repeat and BTB domain-containing protein 3, found in Homo sapiens (Human).